We begin with the raw amino-acid sequence, 313 residues long: Ribose-phosphate pyrophosphokinase (313 aa).

Residues 37–39 and 96–97 contribute to the ATP site; these read DGE and RQ. The Mg(2+) site is built by His-131 and Asp-170. Lys-193 is an active-site residue. D-ribose 5-phosphate contacts are provided by residues Arg-195, Asp-219, and 223–227; that span reads DTAGT.

Belongs to the ribose-phosphate pyrophosphokinase family. Class I subfamily. In terms of assembly, homohexamer. The cofactor is Mg(2+).

The protein localises to the cytoplasm. The enzyme catalyses D-ribose 5-phosphate + ATP = 5-phospho-alpha-D-ribose 1-diphosphate + AMP + H(+). Its pathway is metabolic intermediate biosynthesis; 5-phospho-alpha-D-ribose 1-diphosphate biosynthesis; 5-phospho-alpha-D-ribose 1-diphosphate from D-ribose 5-phosphate (route I): step 1/1. In terms of biological role, involved in the biosynthesis of the central metabolite phospho-alpha-D-ribosyl-1-pyrophosphate (PRPP) via the transfer of pyrophosphoryl group from ATP to 1-hydroxyl of ribose-5-phosphate (Rib-5-P). This chain is Ribose-phosphate pyrophosphokinase, found in Pseudomonas aeruginosa (strain ATCC 15692 / DSM 22644 / CIP 104116 / JCM 14847 / LMG 12228 / 1C / PRS 101 / PAO1).